A 155-amino-acid chain; its full sequence is Small ribosomal subunit protein uS7 (155 aa).

The protein belongs to the universal ribosomal protein uS7 family. As to quaternary structure, part of the 30S ribosomal subunit. Contacts proteins S9 and S11.

Its function is as follows. One of the primary rRNA binding proteins, it binds directly to 16S rRNA where it nucleates assembly of the head domain of the 30S subunit. Is located at the subunit interface close to the decoding center, probably blocks exit of the E-site tRNA. This chain is Small ribosomal subunit protein uS7, found in Cytophaga hutchinsonii (strain ATCC 33406 / DSM 1761 / CIP 103989 / NBRC 15051 / NCIMB 9469 / D465).